A 75-amino-acid chain; its full sequence is F1845 fimbrial adhesin operon regulatory protein DaaF (75 aa).

In terms of biological role, may have a possible regulatory function on the expression of the other daa genes. The sequence is that of F1845 fimbrial adhesin operon regulatory protein DaaF (daaF) from Escherichia coli.